The chain runs to 300 residues: MGSSLSNLNDGTNGLAMGPGLGDIPESCVACVFMYLTPPEICNLAGLNRSFRGAASSDSVWEKKLPENYQDLLDLLPPERYHSLSKKDIFAVLSRPIPFDDDNKEVWIDRVTGRVCMAISARGMSITGIEDRRYWNWIPTEESRFHVVAYLQQIWWFEVDGTVRFHLPPGVYSLSFRIHLGRFTKRLGRRVCHFELTHGWDLKPVRFSLSTSDGQEASCEYYLDDVERNEALGKHKRGYWIEYRVGEFIVNGSEPSTEIQWSMKQIDCTHSKGGLCVDSVFINPIGDVKEHKRKAVLKEA.

In terms of domain architecture, F-box spans 17–63 (MGPGLGDIPESCVACVFMYLTPPEICNLAGLNRSFRGAASSDSVWEK).

The sequence is that of F-box protein PP2-A15 (PP2A15) from Arabidopsis thaliana (Mouse-ear cress).